We begin with the raw amino-acid sequence, 357 residues long: tRNA-specific 2-thiouridylase MnmA (357 aa).

ATP contacts are provided by residues 8–15 (GISGGVDS) and I34. Catalysis depends on C96, which acts as the Nucleophile. A disulfide bridge connects residues C96 and C192. G120 provides a ligand contact to ATP. Positions 142-144 (KDQ) are interaction with tRNA. C192 functions as the Cysteine persulfide intermediate in the catalytic mechanism. The interval 301 to 302 (RY) is interaction with tRNA.

Belongs to the MnmA/TRMU family.

It localises to the cytoplasm. The catalysed reaction is S-sulfanyl-L-cysteinyl-[protein] + uridine(34) in tRNA + AH2 + ATP = 2-thiouridine(34) in tRNA + L-cysteinyl-[protein] + A + AMP + diphosphate + H(+). In terms of biological role, catalyzes the 2-thiolation of uridine at the wobble position (U34) of tRNA, leading to the formation of s(2)U34. In Chlorobium phaeobacteroides (strain DSM 266 / SMG 266 / 2430), this protein is tRNA-specific 2-thiouridylase MnmA.